Reading from the N-terminus, the 692-residue chain is Polyphosphate kinase (692 aa).

N57 contacts ATP. Positions 383 and 413 each coordinate Mg(2+). The active-site Phosphohistidine intermediate is the H443. Y476, R572, and H600 together coordinate ATP.

The protein belongs to the polyphosphate kinase 1 (PPK1) family. Mg(2+) is required as a cofactor. In terms of processing, an intermediate of this reaction is the autophosphorylated ppk in which a phosphate is covalently linked to a histidine residue through a N-P bond.

The catalysed reaction is [phosphate](n) + ATP = [phosphate](n+1) + ADP. Catalyzes the reversible transfer of the terminal phosphate of ATP to form a long-chain polyphosphate (polyP). The sequence is that of Polyphosphate kinase from Acinetobacter baumannii (strain AYE).